A 1070-amino-acid chain; its full sequence is Carbamoyl phosphate synthase large chain (1070 aa).

Positions 1 to 401 are carboxyphosphate synthetic domain; the sequence is MPKRDDIKTI…ALLKAVRSLE (401 aa). ATP is bound by residues R129, R169, G175, G176, K208, I210, E215, G241, I242, H243, Q284, and E298. The region spanning 133 to 327 is the ATP-grasp 1 domain; that stretch reads RDLMNELGEP…IAKLAAKIAV (195 aa). Mg(2+) is bound by residues Q284, E298, and N300. Residues Q284, E298, and N300 each contribute to the Mn(2+) site. Positions 402-546 are oligomerization domain; that stretch reads IGADHLLLEE…YSTYEEENES (145 aa). Positions 547 to 929 are carbamoyl phosphate synthetic domain; it reads TRSAKESVIV…ALYKGFVASG (383 aa). The region spanning 671-861 is the ATP-grasp 2 domain; that stretch reads EKALGILQIP…MANVATRVIL (191 aa). ATP is bound by residues R707, R746, V748, E752, G777, V778, H779, S780, Q820, and E832. Positions 820, 832, and 834 each coordinate Mg(2+). 3 residues coordinate Mn(2+): Q820, E832, and N834. In terms of domain architecture, MGS-like spans 930–1070; it reads TTMHDYGTVL…SEVKQPKARV (141 aa). Residues 930–1070 form an allosteric domain region; it reads TTMHDYGTVL…SEVKQPKARV (141 aa).

It belongs to the CarB family. In terms of assembly, composed of two chains; the small (or glutamine) chain promotes the hydrolysis of glutamine to ammonia, which is used by the large (or ammonia) chain to synthesize carbamoyl phosphate. Tetramer of heterodimers (alpha,beta)4. The cofactor is Mg(2+). Mn(2+) is required as a cofactor.

It catalyses the reaction hydrogencarbonate + L-glutamine + 2 ATP + H2O = carbamoyl phosphate + L-glutamate + 2 ADP + phosphate + 2 H(+). The catalysed reaction is hydrogencarbonate + NH4(+) + 2 ATP = carbamoyl phosphate + 2 ADP + phosphate + 2 H(+). Its pathway is amino-acid biosynthesis; L-arginine biosynthesis; carbamoyl phosphate from bicarbonate: step 1/1. It participates in pyrimidine metabolism; UMP biosynthesis via de novo pathway; (S)-dihydroorotate from bicarbonate: step 1/3. Functionally, large subunit of the glutamine-dependent carbamoyl phosphate synthetase (CPSase). CPSase catalyzes the formation of carbamoyl phosphate from the ammonia moiety of glutamine, carbonate, and phosphate donated by ATP, constituting the first step of 2 biosynthetic pathways, one leading to arginine and/or urea and the other to pyrimidine nucleotides. The large subunit (synthetase) binds the substrates ammonia (free or transferred from glutamine from the small subunit), hydrogencarbonate and ATP and carries out an ATP-coupled ligase reaction, activating hydrogencarbonate by forming carboxy phosphate which reacts with ammonia to form carbamoyl phosphate. The polypeptide is Carbamoyl phosphate synthase large chain (Listeria monocytogenes serotype 4b (strain CLIP80459)).